The primary structure comprises 367 residues: Damage-control phosphatase At2g17340 (367 aa).

Position 1 is an N-acetylmethionine (Met-1). Mn(2+) is bound by residues Asp-220, Asn-221, and Asp-256. Positions 318 to 322 (EGMGR) match the Subfamily II EGMGR motif motif.

The protein belongs to the damage-control phosphatase family. Phosphopantetheine phosphatase II subfamily. In terms of assembly, multimer. Requires Mn(2+) as cofactor. Ni(2+) serves as cofactor.

Activity is strongly promoted by Co(2+), Ni(2+), Mg(2+), Cu(2+) and Mn(2+). Activity is inhibited by EDTA. Metal-dependent phosphatase with probable damage-control functions. Shows phosphatase activity against several substrates, including sugar phosphates and p-nitrophenyl phosphate(pNPP). Prefers sugar phosphate substrates, including the extremely potent glycating agents ribose-5-phosphate and erythrose-4-phosphate. This is Damage-control phosphatase At2g17340 from Arabidopsis thaliana (Mouse-ear cress).